Consider the following 38-residue polypeptide: Photosystem II reaction center protein L (38 aa).

Residues 17–37 (GLYWGLLLIFVLAVLFSSYFF) form a helical membrane-spanning segment.

This sequence belongs to the PsbL family. PSII is composed of 1 copy each of membrane proteins PsbA, PsbB, PsbC, PsbD, PsbE, PsbF, PsbH, PsbI, PsbJ, PsbK, PsbL, PsbM, PsbT, PsbX, PsbY, PsbZ, Psb30/Ycf12, at least 3 peripheral proteins of the oxygen-evolving complex and a large number of cofactors. It forms dimeric complexes.

It localises to the plastid. It is found in the chloroplast thylakoid membrane. Functionally, one of the components of the core complex of photosystem II (PSII). PSII is a light-driven water:plastoquinone oxidoreductase that uses light energy to abstract electrons from H(2)O, generating O(2) and a proton gradient subsequently used for ATP formation. It consists of a core antenna complex that captures photons, and an electron transfer chain that converts photonic excitation into a charge separation. This subunit is found at the monomer-monomer interface and is required for correct PSII assembly and/or dimerization. The sequence is that of Photosystem II reaction center protein L from Staurastrum punctulatum (Green alga).